Consider the following 164-residue polypeptide: Protein SprT (164 aa).

The SprT-like domain occupies 14–156 (QQAETFFKRT…LCRRCREPLV (143 aa)). H69 contributes to the Zn(2+) binding site. E70 is a catalytic residue. H73 contacts Zn(2+).

This sequence belongs to the SprT family. Zn(2+) is required as a cofactor.

The protein localises to the cytoplasm. In Pseudomonas savastanoi pv. phaseolicola (strain 1448A / Race 6) (Pseudomonas syringae pv. phaseolicola (strain 1448A / Race 6)), this protein is Protein SprT.